Reading from the N-terminus, the 321-residue chain is ATP-dependent 6-phosphofructokinase (321 aa).

Gly-11 contributes to the ATP binding site. Arg-21 to Arg-25 contributes to the ADP binding site. ATP is bound by residues Arg-72–Cys-73 and Gly-102–Ser-105. Mg(2+) is bound at residue Asp-103. Thr-126 to Asp-128 contributes to the substrate binding site. Asp-128 acts as the Proton acceptor in catalysis. Arg-155 is an ADP binding site. Substrate is bound by residues Arg-163 and Met-170–Arg-172. ADP is bound by residues Gly-186 to Glu-188, Arg-212, and Lys-214 to His-216. Residues Glu-223, Arg-245, and His-251 to Arg-254 each bind substrate.

Belongs to the phosphofructokinase type A (PFKA) family. ATP-dependent PFK group I subfamily. Prokaryotic clade 'B1' sub-subfamily. In terms of assembly, homotetramer. Requires Mg(2+) as cofactor.

Its subcellular location is the cytoplasm. The enzyme catalyses beta-D-fructose 6-phosphate + ATP = beta-D-fructose 1,6-bisphosphate + ADP + H(+). Its pathway is carbohydrate degradation; glycolysis; D-glyceraldehyde 3-phosphate and glycerone phosphate from D-glucose: step 3/4. Its activity is regulated as follows. Allosterically activated by ADP and other diphosphonucleosides, and allosterically inhibited by phosphoenolpyruvate. In terms of biological role, catalyzes the phosphorylation of D-fructose 6-phosphate to fructose 1,6-bisphosphate by ATP, the first committing step of glycolysis. This is ATP-dependent 6-phosphofructokinase from Caldanaerobacter subterraneus subsp. tengcongensis (strain DSM 15242 / JCM 11007 / NBRC 100824 / MB4) (Thermoanaerobacter tengcongensis).